We begin with the raw amino-acid sequence, 319 residues long: Serpentine receptor class X-43 (319 aa).

7 consecutive transmembrane segments (helical) span residues 28–48 (VVSM…IGCF), 67–87 (AQLM…LLNI), 95–115 (YLFG…FLLM), 138–158 (IRTF…YLVV), 164–184 (FVFY…CGTL), 194–214 (TVLS…LMAF), and 267–287 (FFFT…VVVF).

Belongs to the G-protein coupled receptor 1 family. In terms of tissue distribution, expressed in ASI sensory neurons.

It localises to the cell membrane. It is found in the perikaryon. Its subcellular location is the cell projection. The protein localises to the cilium. Its function is as follows. Receptor for the ascaroside pheromone icas#9 which suppresses exploratory forgaging behavior. In response to ascaroside icas#9, may furthermore play a role in the expression of genes in the TGF-beta signaling pathway, such as daf-7, and in insulin signaling pathway, such as daf-28, which may in turn contribute to exploratory behavior. The chain is Serpentine receptor class X-43 from Caenorhabditis elegans.